The chain runs to 75 residues: Putative antitoxin VapB29 (75 aa).

Possibly the antitoxic component of a type II toxin-antitoxin (TA) system. Its cognate toxin is VapC29 (Potential). This Mycobacterium tuberculosis (strain CDC 1551 / Oshkosh) protein is Putative antitoxin VapB29 (vapB29).